Here is a 124-residue protein sequence, read N- to C-terminus: Large ribosomal subunit protein bL12 (124 aa).

Belongs to the bacterial ribosomal protein bL12 family. Homodimer. Part of the ribosomal stalk of the 50S ribosomal subunit. Forms a multimeric L10(L12)X complex, where L10 forms an elongated spine to which 2 to 4 L12 dimers bind in a sequential fashion. Binds GTP-bound translation factors.

Forms part of the ribosomal stalk which helps the ribosome interact with GTP-bound translation factors. Is thus essential for accurate translation. This chain is Large ribosomal subunit protein bL12, found in Desulfitobacterium hafniense (strain DSM 10664 / DCB-2).